The sequence spans 211 residues: Uridine kinase (211 aa).

Position 15 to 22 (15 to 22 (GGSGSGKT)) interacts with ATP.

It belongs to the uridine kinase family.

The protein localises to the cytoplasm. The catalysed reaction is uridine + ATP = UMP + ADP + H(+). It catalyses the reaction cytidine + ATP = CMP + ADP + H(+). It participates in pyrimidine metabolism; CTP biosynthesis via salvage pathway; CTP from cytidine: step 1/3. Its pathway is pyrimidine metabolism; UMP biosynthesis via salvage pathway; UMP from uridine: step 1/1. The sequence is that of Uridine kinase from Lactobacillus helveticus (strain DPC 4571).